We begin with the raw amino-acid sequence, 509 residues long: NAD-dependent histone deacetylase SIR2 (509 aa).

Positions 1–35 are disordered; it reads MIISRGSHVDEEPVAKKPRISVGEMTDDTTDDGLN. Over residues 25-35 the composition is skewed to acidic residues; the sequence is MTDDTTDDGLN. The Deacetylase sirtuin-type domain occupies 185–476; the sequence is RLSNFYTIDH…TVVAQKCEWD (292 aa). Residues 210–229 and 292–295 each bind NAD(+); these read GAGVSTSLGIPDFRSSEGFY and QNID. His-312 acts as the Proton acceptor in catalysis. 4 residues coordinate Zn(2+): Cys-320, Cys-323, Cys-344, and Cys-347. NAD(+) is bound by residues 420 to 422, 445 to 447, and Cys-462; these read GTS and NKD.

Belongs to the sirtuin family. Class I subfamily. The cofactor is Zn(2+).

It localises to the nucleus. The enzyme catalyses N(6)-acetyl-L-lysyl-[protein] + NAD(+) + H2O = 2''-O-acetyl-ADP-D-ribose + nicotinamide + L-lysyl-[protein]. Functionally, NAD-dependent deacetylase. Heterochromatin component that silences transcription at silent mating loci, telomeres and the ribosomal DNA, and that also suppresses recombination in the rDNA and extends replicative life span. It acts as a NAD-dependent histone deacetylase, which deacetylates 'Lys-9' and 'Lys-14' of Histone H3 and 'Lys-16' of Histone H4. In Candida glabrata (strain ATCC 2001 / BCRC 20586 / JCM 3761 / NBRC 0622 / NRRL Y-65 / CBS 138) (Yeast), this protein is NAD-dependent histone deacetylase SIR2 (SIR2).